Consider the following 623-residue polypeptide: Oviduct-specific glycoprotein (623 aa).

The signal sequence occupies residues 1 to 21 (MWKLLLWVGLVLVLKHHDGAA). The region spanning 22 to 385 (HKLVCYFTNW…YVMNDILVRA (364 aa)) is the GH18 domain. Cysteine 26 and cysteine 51 form a disulfide bridge. Residues 71-72 (LQ), 98-101 (GGWN), tyrosine 142, 211-214 (LSYD), and tryptophan 355 contribute to the chitin site. Asparagine 402 and asparagine 441 each carry an N-linked (GlcNAc...) asparagine glycan. Disordered regions lie at residues 539–558 (LTPV…VSPG) and 594–623 (RKIS…PQDG). Residues 613 to 623 (TSETGTHPQDG) are compositionally biased toward polar residues.

This sequence belongs to the glycosyl hydrolase 18 family. As to expression, oviduct.

The protein resides in the cytoplasmic vesicle. It localises to the secretory vesicle. Binds to oocyte zona pellucida in vivo. May play a role in the fertilization process and/or early embryonic development. The polypeptide is Oviduct-specific glycoprotein (OVGP1) (Papio anubis (Olive baboon)).